A 102-amino-acid chain; its full sequence is DET1- and DDB1-associated protein 1 (102 aa).

Residue Ala-2 is modified to N-acetylalanine. Phosphoserine occurs at positions 33 and 95. The tract at residues 67–102 (NAAKKRDQEQVEAEGESSAPPRKVARTDSPDMPEDT) is disordered.

Belongs to the DDA1 family. In terms of assembly, component of numerous DCX (DDB1-CUL4-X-box) E3 ubiquitin-protein ligase complexes which consist of a core of DDB1, cullin-4 (CUL4A or CUL4B), DDA1 and RBX1. Component of the DCX(DCAF15) complex, also named CLR4(DCAF15) complex, composed of DCAF15, DDB1, cullin-4 (CUL4A or CUL4B), DDA1 and RBX1. Part of the DDD core complex containing DET1, DDA1 and DDB1; the DDD core complex recruits a specific UBE2E enzyme, such as UBE2E1, UBE2E2 UBE2E3, to form specific DDD-E2 complexes.

It functions in the pathway protein modification; protein ubiquitination. In terms of biological role, functions as a component of numerous distinct DCX (DDB1-CUL4-X-box) E3 ubiquitin-protein ligase complexes which mediate the ubiquitination and subsequent proteasomal degradation of target proteins. In the DCX complexes, acts as a scaffolding subunit required to stabilize the complex. This Mus musculus (Mouse) protein is DET1- and DDB1-associated protein 1.